The following is a 1088-amino-acid chain: ATP-dependent helicase/deoxyribonuclease subunit B (1088 aa).

Belongs to the helicase family. AddB/RexB type 2 subfamily. In terms of assembly, heterodimer of AddA and RexB. The cofactor is Mg(2+).

The heterodimer acts as both an ATP-dependent DNA helicase and an ATP-dependent, dual-direction single-stranded exonuclease. Recognizes the chi site generating a DNA molecule suitable for the initiation of homologous recombination. This subunit has 5' -&gt; 3' nuclease activity but not helicase activity. The protein is ATP-dependent helicase/deoxyribonuclease subunit B of Streptococcus suis (strain 98HAH33).